The following is a 1411-amino-acid chain: Protein ECM5 (1411 aa).

One can recognise a JmjN domain in the interval 118-159; the sequence is IPTFILAKKELPDPIKFYELVEDLGSVYGCVKLKIIPDADKF. Positions 185–279 constitute an ARID domain; it reads RTKIVDFYAK…ILLDFDIYEE (95 aa). A disordered region spans residues 285–312; it reads RNNEKNEDMVESEIFRHSNSRSRDEEEP. Residues 476–695 enclose the JmjC domain; sequence KNILDQWNLD…FSSEAAKWTS (220 aa). The segment at 1238–1290 adopts a PHD-type zinc-finger fold; the sequence is TKYCFCRRVEEGTAMVECEICKEWYHVDCISNGELVPPDDPNVLFVCSICTPP.

The protein localises to the nucleus. In terms of biological role, may be involved in cell wall organization and biogenesis. The sequence is that of Protein ECM5 (ECM5) from Saccharomyces cerevisiae (strain ATCC 204508 / S288c) (Baker's yeast).